We begin with the raw amino-acid sequence, 166 residues long: Lipoprotein signal peptidase (166 aa).

The next 3 membrane-spanning stretches (helical) occupy residues 12-32 (LPIA…KYLV), 66-86 (MEGW…LWLW), and 101-121 (AMII…GYVI). Active-site residues include Asp122 and Asp140. Residues 132 to 152 (SFAVFNLADSFITVGAGAIIL) form a helical membrane-spanning segment.

It belongs to the peptidase A8 family.

It is found in the cell inner membrane. It catalyses the reaction Release of signal peptides from bacterial membrane prolipoproteins. Hydrolyzes -Xaa-Yaa-Zaa-|-(S,diacylglyceryl)Cys-, in which Xaa is hydrophobic (preferably Leu), and Yaa (Ala or Ser) and Zaa (Gly or Ala) have small, neutral side chains.. Its pathway is protein modification; lipoprotein biosynthesis (signal peptide cleavage). Functionally, this protein specifically catalyzes the removal of signal peptides from prolipoproteins. This Sinorhizobium fredii (strain NBRC 101917 / NGR234) protein is Lipoprotein signal peptidase.